The chain runs to 248 residues: Probable transcriptional regulatory protein PSPPH_3775 (248 aa).

Belongs to the TACO1 family.

Its subcellular location is the cytoplasm. The chain is Probable transcriptional regulatory protein PSPPH_3775 from Pseudomonas savastanoi pv. phaseolicola (strain 1448A / Race 6) (Pseudomonas syringae pv. phaseolicola (strain 1448A / Race 6)).